Reading from the N-terminus, the 265-residue chain is Hemin import ATP-binding protein HmuV (265 aa).

One can recognise an ABC transporter domain in the interval 13 to 249 (LKASNLHLQL…TAVENVYGWP (237 aa)). 45-52 (GPNGAGKS) serves as a coordination point for ATP.

It belongs to the ABC transporter superfamily. Heme (hemin) importer (TC 3.A.1.14.5) family. As to quaternary structure, the complex is composed of two ATP-binding proteins (HmuV), two transmembrane proteins (HmuU) and a solute-binding protein (HmuT).

The protein localises to the cell inner membrane. In terms of biological role, part of the ABC transporter complex HmuTUV involved in hemin import. Responsible for energy coupling to the transport system. This chain is Hemin import ATP-binding protein HmuV, found in Photobacterium damselae subsp. damselae (Listonella damsela).